The chain runs to 253 residues: Allene oxide cyclase 2, chloroplastic (253 aa).

The N-terminal 77 residues, 1-77 (MASSAVSLQS…SQNGNIENPR (77 aa)), are a transit peptide targeting the chloroplast.

This sequence belongs to the allene oxide cyclase family. Highly expressed in fully developed leaves.

It localises to the plastid. Its subcellular location is the chloroplast. The catalysed reaction is (9Z,13S,15Z)-12,13-epoxyoctadeca-9,11,15-trienoate = (9S,13S,15Z)-12-oxophyto-10,15-dienoate. Its function is as follows. Involved in the production of 12-oxo-phytodienoic acid (OPDA), a precursor of jasmonic acid. This Arabidopsis thaliana (Mouse-ear cress) protein is Allene oxide cyclase 2, chloroplastic (AOC2).